We begin with the raw amino-acid sequence, 230 residues long: Large ribosomal subunit protein uL1c (230 aa).

This sequence belongs to the universal ribosomal protein uL1 family. Part of the 50S ribosomal subunit.

The protein localises to the plastid. The protein resides in the chloroplast. Functionally, binds directly to 23S rRNA. Might be involved in E site tRNA release (Potential). The chain is Large ribosomal subunit protein uL1c (rpl1) from Trieres chinensis (Marine centric diatom).